The sequence spans 480 residues: Major facilitator superfamily domain-containing protein 12 (480 aa).

At Met1 the chain carries N-acetylmethionine. Topologically, residues 1–26 (MGPGPPAAGAAPSPRPLSLVARLSYA) are cytoplasmic. The helical transmembrane segment at 27-47 (VGHFLNDLCASMWFTYLLLYL) threads the bilayer. The Lumenal portion of the chain corresponds to 48–56 (HSVRAYSSR). A helical membrane pass occupies residues 57 to 77 (GAGLLLLLGQVADGLCTPLVG). Topologically, residues 78 to 97 (YEADRAASCCARYGPRKAWH) are cytoplasmic. A helical membrane pass occupies residues 98 to 118 (LVGTVCVLLSFPFIFSPCLGC). Topologically, residues 119 to 124 (GAATPE) are lumenal. Residues 125-145 (WAALLYYGPFIVIFQFGWAST) form a helical membrane-spanning segment. At 146–170 (QISHLSLIPELVTNDHEKVELTALR) the chain is on the cytoplasmic side. Residues 171-191 (YAFTVVANITVYGAAWLLLHL) traverse the membrane as a helical segment. Over 192–218 (QGSSRVEPTQDISISDQLGGQDVPVFR) the chain is Lumenal. The helical transmembrane segment at 219–239 (NLSLLVVGVGAVFSLLFHLGT) threads the bilayer. The Cytoplasmic segment spans residues 240–279 (RERRRPHAEEPGEHTPLLAPATAQPLLLWKHWLREPAFYQ). Position 254 is a phosphothreonine; by MTOR (Thr254). Residues 280–302 (VGILYMTTRLIVNLSQTYMAMYL) form a helical membrane-spanning segment. Residues 303 to 310 (TYSLHLPK) are Lumenal-facing. The helical transmembrane segment at 311 to 331 (KFIATIPLVMYLSGFLSSFLM) threads the bilayer. Over 332–347 (KPINKCIGRNMTYFSG) the chain is Cytoplasmic. Transmembrane regions (helical) follow at residues 348–368 (LLVI…GVAV) and 369–389 (YAAA…SLAM). Topologically, residues 390–402 (TADLIGPHTNSGA) are cytoplasmic. Residues 403–423 (FVYGSMSFLDKVANGLAVMAI) traverse the membrane as a helical segment. The Lumenal segment spans residues 424-446 (QSLHPCPSELCCRACVSFYHWAM). A helical transmembrane segment spans residues 447 to 467 (VAVTGGVGVAAALCLCSLLLW). Residues 468-480 (PTRLRRWDRDARP) lie on the Cytoplasmic side of the membrane.

It belongs to the major facilitator superfamily. In terms of processing, phosphorylation at Thr-254 by MTOR via mTORC1 pathway promotes cysteine transport in lysosomes, thereby regulating lysosomal cysteine and cystine storage and redox homeostasis. As to expression, widely expressed, with high expression in primary melanocytes.

It is found in the melanosome membrane. It localises to the lysosome membrane. The enzyme catalyses L-cysteine(in) = L-cysteine(out). Functionally, transporter that mediates the import of cysteine into melanosomes, thereby regulating skin pigmentation. In melanosomes, cysteine import is required both for normal levels of cystine, the oxidized dimer of cysteine, and provide cysteine for the production of the cysteinyldopas used in pheomelanin synthesis, thereby regulating skin pigmentation. Also catalyzes import of cysteine into lysosomes in non-pigmented cells, regulating lysosomal cystine and cysteine storage, which is essnetial for redox homeostasis. In Homo sapiens (Human), this protein is Major facilitator superfamily domain-containing protein 12.